A 154-amino-acid chain; its full sequence is Proteasome subunit beta type-4 (154 aa).

Met1 bears the N-acetylmethionine mark. The propeptide occupies 1-45; sequence MESILESRSGHWAGGPAPGQFYRIPPTPGSIVDPXSVLYGSPITR. Tyr102 carries the phosphotyrosine modification.

It belongs to the peptidase T1B family. As to quaternary structure, the 26S proteasome consists of a 20S proteasome core and two 19S regulatory subunits. The 20S proteasome core is a barrel-shaped complex made of 28 subunits that are arranged in four stacked rings. The two outer rings are each formed by seven alpha subunits, and the two inner rings are formed by seven beta subunits. The proteolytic activity is exerted by three beta-subunits PSMB5, PSMB6 and PSMB7. Forms a ternary complex with SMAD1 and OAZ1 before PSMB4 is incorporated into the 20S proteasome. Interacts with PRPF19.

It localises to the cytoplasm. The protein localises to the nucleus. Its function is as follows. Non-catalytic component of the 20S core proteasome complex involved in the proteolytic degradation of most intracellular proteins. This complex plays numerous essential roles within the cell by associating with different regulatory particles. Associated with two 19S regulatory particles, forms the 26S proteasome and thus participates in the ATP-dependent degradation of ubiquitinated proteins. The 26S proteasome plays a key role in the maintenance of protein homeostasis by removing misfolded or damaged proteins that could impair cellular functions, and by removing proteins whose functions are no longer required. Associated with the PA200 or PA28, the 20S proteasome mediates ubiquitin-independent protein degradation. This type of proteolysis is required in several pathways including spermatogenesis (20S-PA200 complex) or generation of a subset of MHC class I-presented antigenic peptides (20S-PA28 complex). SMAD1/OAZ1/PSMB4 complex mediates the degradation of the CREBBP/EP300 repressor SNIP1. The polypeptide is Proteasome subunit beta type-4 (PSMB4) (Sus scrofa (Pig)).